We begin with the raw amino-acid sequence, 770 residues long: Protein PAT1 homolog 1 (770 aa).

A disordered region spans residues 1 to 26 (MFRYESLEDCPLDEDEDAFQGLGEED). The region A; interaction with DDX6/RCK stretch occupies residues 1–84 (MFRYESLEDC…EMDLLGDHEE (84 aa)). Residues 1–397 (MFRYESLEDC…HRSSHQDHLR (397 aa)) are involved in nuclear foci localization. Positions 7-26 (LEDCPLDEDEDAFQGLGEED) are enriched in acidic residues. Residues 85 to 388 (NLAERLSKMV…LNGAGDRGSH (304 aa)) form a region N; interaction with decapping machinery region. Residues 86 to 95 (LAERLSKMVI) carry the Nuclear export signal motif. Ser177 carries the post-translational modification Phosphoserine. At Thr178 the chain carries Phosphothreonine. Phosphoserine occurs at positions 179 and 184. Thr194 carries the phosphothreonine modification. Arg217, Arg223, and Arg263 each carry asymmetric dimethylarginine. The involved in RNA-binding stretch occupies residues 223-397 (RYPAPYGERM…HRSSHQDHLR (175 aa)). Position 278 is a phosphoserine (Ser278). At Arg284 the chain carries Asymmetric dimethylarginine. Over residues 314 to 323 (GFRAFFSAPP) the composition is skewed to low complexity. Disordered stretches follow at residues 314-344 (GFRAFFSAPPSATPPPQQHPPGPGPHLQNLR) and 360-399 (QHRRLLHQRQQQNRSQHRNLNGAGDRGSHRSSHQDHLRKD). Over residues 324 to 337 (SATPPPQQHPPGPG) the composition is skewed to pro residues. Low complexity predominate over residues 367-380 (QRQQQNRSQHRNLN). Arg385 carries the post-translational modification Omega-N-methylarginine. Basic and acidic residues predominate over residues 385-399 (RGSHRSSHQDHLRKD). Residues 389–448 (RSSHQDHLRKDPYANLMLQREKDWVSKIQMMQLQSTDPYLDDFYYQNYFEKLEKLSAAEE) are region H. The involved in nuclear speckle localization stretch occupies residues 398 to 770 (KDPYANLMLQ…TKLQLVQGIR (373 aa)). Residues 449–770 (IQGDGPKKER…TKLQLVQGIR (322 aa)) are region C.

This sequence belongs to the PAT1 family. As to quaternary structure, interacts (via region A) with DDX6/RCK. Interacts (via region H and region C) with LSM1 and LSM4. Interacts (via region N) with DCP1A, DCP2, EDC3, EDC4 and XRN1. Interacts with the CCR4-NOT complex. Interacts with the Lsm-containing SMN-Sm protein complex. Interacts with EIF4ENIF1/4E-T. In terms of tissue distribution, ubiquitous.

It is found in the cytoplasm. The protein localises to the P-body. Its subcellular location is the nucleus. It localises to the PML body. The protein resides in the nucleus speckle. In terms of biological role, RNA-binding protein involved in deadenylation-dependent decapping of mRNAs, leading to the degradation of mRNAs. Acts as a scaffold protein that connects deadenylation and decapping machinery. Required for cytoplasmic mRNA processing body (P-body) assembly. (Microbial infection) In case of infection, required for translation and replication of hepatitis C virus (HCV). This Homo sapiens (Human) protein is Protein PAT1 homolog 1 (PATL1).